The primary structure comprises 255 residues: MAVGKNKRLSKGKKGLKKRTQDPFSRKDEYSVKAPSTFAIRDVGKTLVNRTTGLKNANDSLKGRIFEVSLADLQNDEDHAFRKVKLRVDEVQGKNCLTNFHGLDFTSDKLRSLVRKWQTLIEANVTVKTTDDYLLRLFAIAFTKRRPNQIKKTTYARSSQIRAIRKKITEIIQREASTRTLAQLTKLIPEVIGREIEKATHGIYPLQNVHIRKVKLLKSPKFDLGALLALHGESSTDDKGQKVEREFKEQVLESV.

The segment covering 1-18 (MAVGKNKRLSKGKKGLKK) has biased composition (basic residues). Residues 1–28 (MAVGKNKRLSKGKKGLKKRTQDPFSRKD) are disordered. Position 2 is an N-acetylalanine; partial (A2). The span at 19-28 (RTQDPFSRKD) shows a compositional bias: basic and acidic residues.

The protein belongs to the eukaryotic ribosomal protein eS1 family. Component of the small ribosomal subunit. Mature ribosomes consist of a small (40S) and a large (60S) subunit. The 40S subunit contains about 33 different proteins and 1 molecule of RNA (18S). The 60S subunit contains about 49 different proteins and 3 molecules of RNA (25S, 5.8S and 5S).

Its subcellular location is the cytoplasm. This is Small ribosomal subunit protein eS1 from Ajellomyces dermatitidis (strain ER-3 / ATCC MYA-2586) (Blastomyces dermatitidis).